A 350-amino-acid chain; its full sequence is C5a anaphylatoxin chemotactic receptor 1 (350 aa).

The Extracellular portion of the chain corresponds to 1–37 (MDSFDYTTPDYGHYDDKDTLDLNTPVDKTSNTLRVPD). The segment at 10–18 (DYGHYDDKD) is required for CHIPS binding. Sulfotyrosine occurs at positions 11 and 14. The interval 21–30 (DLNTPVDKTS) is involved in C5a binding. A helical membrane pass occupies residues 38–64 (ILALVIFAVVFLVGVLGNALVVWVTAF). At 65-69 (EAKRT) the chain is on the cytoplasmic side. A helical membrane pass occupies residues 70-93 (INAIWFLNLAVADFLSCLALPILF). Residues 94 to 110 (TSIVQHHHWPFGGAACS) are Extracellular-facing. The cysteines at positions 109 and 188 are disulfide-linked. The chain crosses the membrane as a helical span at residues 111 to 132 (ILPSLILLNMYASILLLATISA). The Cytoplasmic segment spans residues 133–153 (DRFLLVFKPIWCQNFRGAGLA). The chain crosses the membrane as a helical span at residues 154–174 (WIACAVAWGLALLLTIPSFLY). Over 175-200 (RVVREEYFPPKVLCGVDYSHDKRRER) the chain is Extracellular. A helical membrane pass occupies residues 201–226 (AVAIVRLVLGFLWPLLTLMICYTFIL). Topologically, residues 227 to 242 (LRTWSRRATRSTKTLK) are cytoplasmic. Residues 243–265 (VVVAVVASFFIFWLPYQVTGIMM) traverse the membrane as a helical segment. At 266-282 (SFLEPSSPTFRLLKKLD) the chain is on the extracellular side. A helical membrane pass occupies residues 283–303 (SLCVSFAYINCCINPIIYVVA). Over 304–350 (GQGFQGRLQKSLPSLLRNVLTEESVVRESKSFARSTVDTMADKTQAV) the chain is Cytoplasmic. Phosphoserine is present on residues S314, S317, S327, S332, S334, and S338.

It belongs to the G-protein coupled receptor 1 family. Homodimer. May also form higher-order oligomers. Interacts (when phosphorylated) with ARRB1 and ARRB2; the interaction is associated with internalization of C5aR. Interacts (via N-terminal domain) with S.aureus chemotaxis inhibitory protein (CHIPS); the interaction blocks the receptor and may thus inhibit the immune response. Post-translationally, sulfation plays a critical role in the association of C5aR with C5a, but no significant role in the ability of the receptor to transduce a signal and mobilize calcium in response to a small peptide agonist. Sulfation at Tyr-14 is important for CHIPS binding. In terms of processing, phosphorylated on serine residues in response to C5a binding, resulting in internalization of the receptor and short-term desensitization to C5a.

The protein localises to the cell membrane. It is found in the cytoplasmic vesicle. Functionally, receptor for the chemotactic and inflammatory peptide anaphylatoxin C5a. The ligand interacts with at least two sites on the receptor: a high-affinity site on the extracellular N-terminus, and a second site in the transmembrane region which activates downstream signaling events. Receptor activation stimulates chemotaxis, granule enzyme release, intracellular calcium release and superoxide anion production. This Pan troglodytes (Chimpanzee) protein is C5a anaphylatoxin chemotactic receptor 1 (C5AR1).